The primary structure comprises 391 residues: 4-coumarate--CoA ligase (391 aa).

The protein belongs to the ATP-dependent AMP-binding enzyme family.

The enzyme catalyses (E)-4-coumarate + ATP + CoA = (E)-4-coumaroyl-CoA + AMP + diphosphate. In terms of biological role, converts p-coumaric acid into p-coumaryl CoA. This is necessary for the activation of the photoactive yellow protein (PYP) chromophore. This chain is 4-coumarate--CoA ligase (pcl), found in Halorhodospira halophila (Ectothiorhodospira halophila).